Consider the following 54-residue polypeptide: Photoreceptor disk component PRCD (54 aa).

The S-palmitoyl cysteine moiety is linked to residue Cys-2. A disordered region spans residues 25 to 54 (PEPSDVDGAARGSSLDADPQSSGREKEPLK).

It belongs to the PRCD family. Interacts with RHO/rhodopsin; the interaction promotes PRCD stability. Palmitoylated at Cys-2. Palmitoylation is essential for protein stability and trafficking to the photoreceptor outer segment, but does not appear to be essential for membrane localization. Probably palmitoylated by ZDHHC3. In terms of processing, phosphorylated.

It is found in the cell projection. Its subcellular location is the cilium. It localises to the photoreceptor outer segment. The protein resides in the membrane. The protein localises to the endoplasmic reticulum. It is found in the golgi apparatus. Functionally, involved in vision. This Homo sapiens (Human) protein is Photoreceptor disk component PRCD.